Here is a 213-residue protein sequence, read N- to C-terminus: Membrane-spanning 4-domains subfamily A member 3 (213 aa).

Residues 1–26 (MKPEETGGSVYQPLDESRHVQRGVLQ) lie on the Cytoplasmic side of the membrane. A helical membrane pass occupies residues 27–47 (ALGAIQILNGILILALGIFLV). The Extracellular portion of the chain corresponds to 48–58 (CLQHVSHHFRH). Residues 59-79 (FFFFTFYTGYPLWGAVFFISS) form a helical membrane-spanning segment. At 80-97 (GSLTVAAGRNPTRMLMQN) the chain is on the cytoplasmic side. The helical transmembrane segment at 98 to 118 (SFGINIASTTIAFVGTVFLSV) threads the bilayer. Residues 119 to 148 (HLAFNTQAFKGCQSSPSPDVCISLGSSSDG) are Extracellular-facing. Residues 149 to 169 (LVSLMLILTLLELSVTISISA) traverse the membrane as a helical segment. Topologically, residues 170–213 (MWCLGNVCGLREAITSPPNSVESGILPEGSDSENLNTQPQASEE) are cytoplasmic. The interval 189-213 (SVESGILPEGSDSENLNTQPQASEE) is disordered. The span at 201–213 (SENLNTQPQASEE) shows a compositional bias: polar residues.

The protein belongs to the MS4A family. In terms of assembly, interacts with CDKN3. Interacts with CDKN3-CDK2 complexes through its binding to CDKN3; this interaction facilitates dissociation of cyclin A from CDKN3-CDK2 complexes. In terms of tissue distribution, expressed at low levels only in specific immune tissues, such as, spleen, bone marrow and peripheral blood leukocytes.

Its subcellular location is the membrane. Functionally, hematopoietic modulator for the G1-S cell cycle transition. Modulates the level of phosphorylation of cyclin-dependent kinase 2 (CDK2) through its direct binding to cyclin-dependent kinase inhibitor 3 (CDKN3/KAP). The polypeptide is Membrane-spanning 4-domains subfamily A member 3 (Ms4a3) (Mus musculus (Mouse)).